A 220-amino-acid chain; its full sequence is Octanoyltransferase (220 aa).

Positions 27–208 constitute a BPL/LPL catalytic domain; sequence PGTADEIWLC…QLARAHGQAV (182 aa). Residues 66 to 73, 139 to 141, and 152 to 154 each bind substrate; these read RGGQVTYH, ALG, and GLA. Cys-170 acts as the Acyl-thioester intermediate in catalysis.

It belongs to the LipB family.

It localises to the cytoplasm. The enzyme catalyses octanoyl-[ACP] + L-lysyl-[protein] = N(6)-octanoyl-L-lysyl-[protein] + holo-[ACP] + H(+). Its pathway is protein modification; protein lipoylation via endogenous pathway; protein N(6)-(lipoyl)lysine from octanoyl-[acyl-carrier-protein]: step 1/2. Functionally, catalyzes the transfer of endogenously produced octanoic acid from octanoyl-acyl-carrier-protein onto the lipoyl domains of lipoate-dependent enzymes. Lipoyl-ACP can also act as a substrate although octanoyl-ACP is likely to be the physiological substrate. The polypeptide is Octanoyltransferase (Bordetella pertussis (strain Tohama I / ATCC BAA-589 / NCTC 13251)).